The primary structure comprises 338 residues: Activator of 90 kDa heat shock protein ATPase homolog 1 (338 aa).

At Lys3 the chain carries N6-acetyllysine. Lys182 participates in a covalent cross-link: Glycyl lysine isopeptide (Lys-Gly) (interchain with G-Cter in SUMO1). A Phosphoserine modification is found at Ser193. Residue Lys203 forms a Glycyl lysine isopeptide (Lys-Gly) (interchain with G-Cter in SUMO2) linkage. An N6-acetyllysine modification is found at Lys212. Position 223 is a phosphotyrosine; by ABL (Tyr223). Position 258 is a phosphoserine (Ser258).

The protein belongs to the AHA1 family. In terms of assembly, interacts with HSPCA/HSP90. Interacts (phosphorylated on Tyr-223) with HSP90AA1; the interaction activates HSP90AA1 ATPase activity. Interacts with HSP90AB1. Interacts with GCH1. Interacts with SRPK1. Interacts with FLCN. As to quaternary structure, (Microbial infection) Interacts with vesicular stomatitis virus glycoprotein (VSV G) (via cytoplasmic tail). Post-translationally, phosphorylation at Tyr-223 enhances binding to chaperone HSP90AA1. In terms of tissue distribution, expressed in numerous tissues, including brain, heart, skeletal muscle and kidney and, at lower levels, liver and placenta.

Its subcellular location is the cytoplasm. The protein localises to the cytosol. It localises to the endoplasmic reticulum. Acts as a co-chaperone of HSP90AA1. Activates the ATPase activity of HSP90AA1 leading to increase in its chaperone activity. Competes with the inhibitory co-chaperone FNIP1 for binding to HSP90AA1, thereby providing a reciprocal regulatory mechanism for chaperoning of client proteins. Competes with the inhibitory co-chaperone TSC1 for binding to HSP90AA1, thereby providing a reciprocal regulatory mechanism for chaperoning of client proteins. This Homo sapiens (Human) protein is Activator of 90 kDa heat shock protein ATPase homolog 1 (AHSA1).